The following is a 196-amino-acid chain: Na(+)-translocating ferredoxin:NAD(+) oxidoreductase complex subunit E (196 aa).

The next 5 helical transmembrane spans lie at 38–58, 68–88, 92–112, 127–147, and 169–189; these read MGMG…ISAL, IPAF…LMKA, ALDA…IILA, FADA…LGSI, and VLLM…IGLI.

Belongs to the NqrDE/RnfAE family. In terms of assembly, the complex is composed of six subunits: RnfA, RnfB, RnfC, RnfD, RnfE and RnfG.

The protein resides in the cell membrane. It catalyses the reaction 2 reduced [2Fe-2S]-[ferredoxin] + Na(+)(in) + NAD(+) + H(+) = 2 oxidized [2Fe-2S]-[ferredoxin] + Na(+)(out) + NADH. Part of a membrane-bound complex that couples electron transfer with translocation of ions across the membrane. Couples electron transfer from reduced ferredoxin to NAD(+) with electrogenic movement of Na(+) out of the cell. Involved in caffeate respiration. The protein is Na(+)-translocating ferredoxin:NAD(+) oxidoreductase complex subunit E of Acetobacterium woodii (strain ATCC 29683 / DSM 1030 / JCM 2381 / KCTC 1655 / WB1).